The chain runs to 531 residues: Putative cysteine ligase BshC (531 aa).

Positions 447-481 (KAQEKKQTKGLDNLEKRLLKAEKKMHSEKLKKIIE) form a coiled coil.

This sequence belongs to the BshC family.

The polypeptide is Putative cysteine ligase BshC (Flavobacterium psychrophilum (strain ATCC 49511 / DSM 21280 / CIP 103535 / JIP02/86)).